Reading from the N-terminus, the 414-residue chain is WW domain-containing oxidoreductase (414 aa).

Positions 1–24 are disordered; the sequence is MAALRYAGLDDTDSEDELPPGWEE. Threonine 12 is modified (phosphothreonine). Serine 14 is subject to Phosphoserine. The region spanning 16–49 is the WW 1 domain; it reads DELPPGWEERTTKDGWVYYANHTEEKTQWEHPKT. Tyrosine 33 carries the phosphotyrosine modification. A Nuclear localization signal motif is present at residues 50 to 55; it reads GKRKRV. The 34-residue stretch at 57 to 90 folds into the WW 2 domain; sequence GDLPYGWEQGTDENGQVFFVDHINKRTTYLDPRL. Residues 125 to 414 are interaction with MAPT; the sequence is KVVVVTGANS…IQERLGSQSG (290 aa). 131 to 137 lines the NADP(+) pocket; sequence GANSGIG. The tract at residues 209–273 is mediates targeting to the mitochondria; the sequence is CNAATFALPW…RFTDINDSLG (65 aa). Serine 260 serves as a coordination point for substrate. Tyrosine 287 is subject to Phosphotyrosine; by TNK2. Catalysis depends on tyrosine 293, which acts as the Proton acceptor.

This sequence belongs to the short-chain dehydrogenases/reductases (SDR) family. Interacts with TP53, p73/TP73 and MAPK8. Interacts with MAPT/TAU, RUNX2 and HYAL2. Forms a ternary complex with TP53 and MDM2. Interacts with ERBB4, LITAF and WBP1. Interacts with DVL1, DVL2 and DVL3. May interact with FAM189B and SCOTIN. Interacts with TNK2. Interacts with TMEM207. Interacts (via WW domain) with VOPP1. Post-translationally, phosphorylated upon genotoxic stress. Phosphorylation of Tyr-33 regulates interaction with TP53, TP73 and MAPK8. May also regulate proapoptotic activity. Phosphorylation by TNK2 is associated with polyubiquitination and degradation. Ubiquitinated when phosphorylated by TNK2, leading to its degradation.

It is found in the cytoplasm. Its subcellular location is the nucleus. The protein resides in the mitochondrion. The protein localises to the golgi apparatus. It localises to the lysosome. Its function is as follows. Putative oxidoreductase. Acts as a tumor suppressor and plays a role in apoptosis. May function synergistically with p53/TP53 to control genotoxic stress-induced cell death. Plays a role in TGFB1 signaling and TGFB1-mediated cell death. May also play a role in tumor necrosis factor (TNF)-mediated cell death. Required for normal bone development. Inhibits Wnt signaling, probably by sequestering DVL2 in the cytoplasm. The polypeptide is WW domain-containing oxidoreductase (WWOX) (Pongo abelii (Sumatran orangutan)).